The sequence spans 201 residues: Beta-lactamase inhibitory protein (201 aa).

The N-terminal stretch at 1–36 (MRTVGIGAGVRRLGRAVVMAAAVGGLVLGSAGASNA) is a signal peptide. Repeat copies occupy residues 37-112 (AGVM…EKLL) and 116-201 (APTL…WDLV). 2 disulfide bridges follow: Cys-66-Cys-78 and Cys-145-Cys-167.

In terms of assembly, interacts with E.coli beta-lactamase TEM-1; interaction inhibits hydrolysis of beta-lactam antibiotics. Interacts with K.pneumoniae beta-lactamase SHV-1. Interacts with K.pneumoniae beta-lactamases KPC-2 and KPC-3; interaction inhibits hydrolysis of beta-lactam antibiotics. Interacts with E.coli beta-lactamases CTX-M-14 and CTX-M-15; interaction inhibits hydrolysis of beta-lactam antibiotics.

It is found in the secreted. Inhibits a wide variety of beta lactamases. The polypeptide is Beta-lactamase inhibitory protein (Streptomyces clavuligerus).